The sequence spans 413 residues: S-adenosylmethionine synthase (413 aa).

His-15 lines the ATP pocket. A Mg(2+)-binding site is contributed by Asp-17. A K(+)-binding site is contributed by Glu-43. L-methionine contacts are provided by Glu-56 and Gln-100. Residues 100-110 form a flexible loop region; the sequence is QSPDISQGVNE. Residues 171 to 173, 248 to 249, Asp-257, 263 to 264, Ala-280, and Lys-284 each bind ATP; these read DGK, KF, and RK. Asp-257 provides a ligand contact to L-methionine. Lys-288 contacts L-methionine.

The protein belongs to the AdoMet synthase family. Homotetramer; dimer of dimers. Mg(2+) is required as a cofactor. Requires K(+) as cofactor.

It localises to the cytoplasm. The enzyme catalyses L-methionine + ATP + H2O = S-adenosyl-L-methionine + phosphate + diphosphate. It participates in amino-acid biosynthesis; S-adenosyl-L-methionine biosynthesis; S-adenosyl-L-methionine from L-methionine: step 1/1. Functionally, catalyzes the formation of S-adenosylmethionine (AdoMet) from methionine and ATP. The overall synthetic reaction is composed of two sequential steps, AdoMet formation and the subsequent tripolyphosphate hydrolysis which occurs prior to release of AdoMet from the enzyme. The sequence is that of S-adenosylmethionine synthase from Prochlorococcus marinus subsp. pastoris (strain CCMP1986 / NIES-2087 / MED4).